The chain runs to 65 residues: Putative per-hexamer repeat protein 2 (65 aa).

This is Putative per-hexamer repeat protein 2 (Phxr2) from Mus musculus (Mouse).